Consider the following 570-residue polypeptide: MSEKHPGPLVVEGKLTDAERMKHESNYLRGTIAEDLNDGLTGGFKGDNFLLIRFHGMYQQDDRDIRAERAEQKLEPRHAMLLRCRLPGGVITTKQWQAIDKFAGENTIYGSIRLTNRQTFQFHGILKKNVKPVHQMLHSVGLDALATANDMNRNVLCTSNPYESQLHAEAYEWAKKISEHLLPRTRAYAEIWLDQEKVATTDEEPILGQTYLPRKFKTTVVIPPQNDIDLHANDMNFVAIAENGKLVGFNLLVGGGLSIEHGNKKTYARTASEFGYLPLEHTLAVAEAVVTTQRDWGNRTDRKNAKTKYTLERVGVETFKAEVERRAGIKFEPIRPYEFTGRGDRIGWVKGIDDNWHLTLFIENGRILDYPARPLKTGLLEIAKIHKGDFRITANQNLIIAGVPESEKAKIEKIAKESGLMNAVTPQRENSMACVSFPTCPLAMAEAERFLPSFIDNIDNLMAKHGVSDEHIVMRVTGCPNGCGRAMLAEVGLVGKAPGRYNLHLGGNRIGTRIPRMYKENITEPEILASLDELIGRWAKEREAGEGFGDFTVRAGIIRPVLDPARDLWD.

The [4Fe-4S] cluster site is built by Cys434, Cys440, Cys479, and Cys483. Siroheme is bound at residue Cys483.

Belongs to the nitrite and sulfite reductase 4Fe-4S domain family. As to quaternary structure, alpha(8)-beta(8). The alpha component is a flavoprotein, the beta component is a hemoprotein. Siroheme serves as cofactor. Requires [4Fe-4S] cluster as cofactor.

The catalysed reaction is hydrogen sulfide + 3 NADP(+) + 3 H2O = sulfite + 3 NADPH + 4 H(+). It participates in sulfur metabolism; hydrogen sulfide biosynthesis; hydrogen sulfide from sulfite (NADPH route): step 1/1. Its function is as follows. Component of the sulfite reductase complex that catalyzes the 6-electron reduction of sulfite to sulfide. This is one of several activities required for the biosynthesis of L-cysteine from sulfate. In Escherichia coli (strain K12), this protein is Sulfite reductase [NADPH] hemoprotein beta-component (cysI).